We begin with the raw amino-acid sequence, 243 residues long: MKAAYIVGTDTDVGKTFICAGLCWALKEKGYNIGYFKPVLSGAKRRGKMLIPQDTEFVVNFAKIEGDIYRLTPFIFEKPASPHIAASDENIDINVYQIKQTFEDLSQNYEFVVIEGCGGLAVPLKEEKNQFYMQYQLIKEICNNVILVTTTKLGTINHTLLTVEFAKAYGLCLKGIIVNMYKNEPDEDKVINTIAKFTNIPILAKVDFINDFPSDVDENKFKNVFKKCFDDRAIMKIMGVFEC.

ATP is bound at residue Asp-12 to Phe-17. Thr-16 serves as a coordination point for Mg(2+). Lys-37 is a catalytic residue. Residue Ser-41 participates in substrate binding. Residues Asp-54, Glu-115–Gly-118, and Asn-179–Met-180 contribute to the ATP site. Residues Asp-54 and Glu-115 each coordinate Mg(2+).

This sequence belongs to the dethiobiotin synthetase family. Homodimer. It depends on Mg(2+) as a cofactor.

It localises to the cytoplasm. The catalysed reaction is (7R,8S)-7,8-diammoniononanoate + CO2 + ATP = (4R,5S)-dethiobiotin + ADP + phosphate + 3 H(+). It functions in the pathway cofactor biosynthesis; biotin biosynthesis; biotin from 7,8-diaminononanoate: step 1/2. Catalyzes a mechanistically unusual reaction, the ATP-dependent insertion of CO2 between the N7 and N8 nitrogen atoms of 7,8-diaminopelargonic acid (DAPA, also called 7,8-diammoniononanoate) to form a ureido ring. In Caldicellulosiruptor bescii (strain ATCC BAA-1888 / DSM 6725 / KCTC 15123 / Z-1320) (Anaerocellum thermophilum), this protein is ATP-dependent dethiobiotin synthetase BioD.